Consider the following 319-residue polypeptide: Acetyl esterase (319 aa).

The short motif at 91 to 93 (HGG) is the Involved in the stabilization of the negatively charged intermediate by the formation of the oxyanion hole element. Residues Ser165, Asp262, and His292 contribute to the active site.

The protein belongs to the 'GDXG' lipolytic enzyme family. Homodimer. Interacts with MalT and MelA.

It localises to the cytoplasm. Displays esterase activity towards short chain fatty esters (acyl chain length of up to 8 carbons). Able to hydrolyze triacetylglycerol (triacetin) and tributyrylglycerol (tributyrin), but not trioleylglycerol (triolein) or cholesterol oleate. Negatively regulates MalT activity by antagonizing maltotriose binding. Inhibits MelA galactosidase activity. This is Acetyl esterase from Escherichia coli O6:H1 (strain CFT073 / ATCC 700928 / UPEC).